The following is a 769-amino-acid chain: Disintegrin and metalloproteinase domain-containing protein 11 (769 aa).

Positions 1–23 (MRLLRRWAFAALLLSLLPTPGLG) are cleaved as a signal peptide. Positions 24-225 (TQGPAGALRW…PNRPRLRRKR (202 aa)) are excised as a propeptide. The disordered stretch occupies residues 40 to 78 (GGPGAPEVTEPSRLVRESSGGEVRKQQLDTRVRQEPPGG). Over residues 61-73 (EVRKQQLDTRVRQ) the composition is skewed to basic and acidic residues. Residues asparagine 96 and asparagine 163 are each glycosylated (N-linked (GlcNAc...) asparagine). Residues 226-734 (QVRRGHPTVH…ERYKGPSGTN (509 aa)) are Extracellular-facing. Residues 239–438 (KYVELIVIND…GGGSCLFNKP (200 aa)) form the Peptidase M12B domain. Residues 332-769 (GRTFQSTSSG…NIRRGRSGGA (438 aa)) form a required for localization to cerebellar cortex basket cell terminals. Also required for localization of KCNA1, KCNA2, DLG4 and ADAM22 to cerebellar cortex basket cell terminal perisomatic axons and pinceaux region. Cystine bridges form between cysteine 349/cysteine 433, cysteine 392/cysteine 417, cysteine 394/cysteine 401, and cysteine 503/cysteine 523. In terms of domain architecture, Disintegrin spans 444–531 (PPECGNGFVE…QCPPNLHKLD (88 aa)). N-linked (GlcNAc...) asparagine glycans are attached at residues asparagine 605 and asparagine 673. Intrachain disulfides connect cysteine 677–cysteine 692, cysteine 686–cysteine 698, and cysteine 700–cysteine 709. The EGF-like domain occupies 677 to 709 (CPGSGERRICSHHGVCSNEGKCICQPDWTGKDC). The chain crosses the membrane as a helical span at residues 735-755 (IIIGSIAGAVLVAAIVLGGTG). Over 756–769 (WGFKNIRRGRSGGA) the chain is Cytoplasmic.

In terms of assembly, interacts with LGI1 and LGI4. Interacts with KCNA1/KV1.1, KCNA2/KV1.2, DLG4/PSD-95 and ADAM22. Post-translationally, the precursor is cleaved by a furin endopeptidase. In terms of tissue distribution, expressed predominantly in brain. Slightly detected or not at all in other tissues.

It is found in the presynaptic cell membrane. The protein localises to the perikaryon. The protein resides in the cell projection. It localises to the axon. Its function is as follows. Probable ligand for integrin in the brain. This is a non catalytic metalloprotease-like protein. Required for localization of the potassium channel subunit proteins KCNA1/KV1.1 and KCNA2/KV1.2 at cerebellar cortex basket cell distal terminals, is thereby involved in ephaptic inhibitory synchronization of Purkinje cell firing and response to stress. Plays a role in spatial learning and motor coordination. Involved in the nociceptive pain response to chemical-derived stimulation. This is Disintegrin and metalloproteinase domain-containing protein 11 (ADAM11) from Homo sapiens (Human).